The primary structure comprises 301 residues: MKIGILSQFPQLYSTQRLVEACQSRGHEAVVINTLNCYMNINSIKPSIHYEGTELVGFDAIIPRIHASVTFYGCAVVRQFEMMGVYAANDSISIARSRDKLRALQLLSRKGIGMPVTGFANKPNDIPDLINMVGGAPLVIKLLEGTQGIGVVLAETKTAAESVIEAFLGLKANILVQEYIKESNGSDIRCFVVGDKVIASMKRQGPEGDFRSNLHLGGCGEVVKITAVERKMAIAAVKAMGLVVAGVDILRSNRGPLILEVNSAPGIEGIEQTTGISVTEPIVEYIEKMVSARKTNRPIIA.

The region spanning 104–287 (LQLLSRKGIG…VTEPIVEYIE (184 aa)) is the ATP-grasp domain. ATP-binding positions include Lys-141, 178-179 (EY), Asp-187, and 211-213 (RSN). The Mg(2+) site is built by Asp-248, Glu-260, and Asn-262. 3 residues coordinate Mn(2+): Asp-248, Glu-260, and Asn-262.

This sequence belongs to the RimK family. Requires Mg(2+) as cofactor. Mn(2+) serves as cofactor.

In Shewanella baltica (strain OS195), this protein is Probable alpha-L-glutamate ligase 2.